We begin with the raw amino-acid sequence, 400 residues long: Ornithine aminotransferase (400 aa).

Lysine 254 bears the N6-(pyridoxal phosphate)lysine mark.

Belongs to the class-III pyridoxal-phosphate-dependent aminotransferase family. OAT subfamily. It depends on pyridoxal 5'-phosphate as a cofactor.

It localises to the cytoplasm. The catalysed reaction is a 2-oxocarboxylate + L-ornithine = L-glutamate 5-semialdehyde + an L-alpha-amino acid. Its pathway is amino-acid biosynthesis; L-proline biosynthesis; L-glutamate 5-semialdehyde from L-ornithine: step 1/1. In terms of biological role, catalyzes the interconversion of ornithine to glutamate semialdehyde. This chain is Ornithine aminotransferase, found in Exiguobacterium sp. (strain ATCC BAA-1283 / AT1b).